The following is a 328-amino-acid chain: Ferredoxin--NADP reductase (328 aa).

The FAD site is built by Glu34, Gln42, Tyr47, Val87, Phe120, Asp283, and Thr323.

It belongs to the ferredoxin--NADP reductase type 2 family. In terms of assembly, homodimer. The cofactor is FAD.

It catalyses the reaction 2 reduced [2Fe-2S]-[ferredoxin] + NADP(+) + H(+) = 2 oxidized [2Fe-2S]-[ferredoxin] + NADPH. This chain is Ferredoxin--NADP reductase, found in Pediococcus pentosaceus (strain ATCC 25745 / CCUG 21536 / LMG 10740 / 183-1w).